The primary structure comprises 1179 residues: ATP-dependent helicase/deoxyribonuclease subunit B (1179 aa).

The protein belongs to the helicase family. AddB/RexB type 2 subfamily. As to quaternary structure, heterodimer of AddA and RexB. It depends on Mg(2+) as a cofactor.

Its function is as follows. The heterodimer acts as both an ATP-dependent DNA helicase and an ATP-dependent, dual-direction single-stranded exonuclease. Recognizes the chi site generating a DNA molecule suitable for the initiation of homologous recombination. This subunit has 5' -&gt; 3' nuclease activity but not helicase activity. This chain is ATP-dependent helicase/deoxyribonuclease subunit B, found in Lactobacillus delbrueckii subsp. bulgaricus (strain ATCC 11842 / DSM 20081 / BCRC 10696 / JCM 1002 / NBRC 13953 / NCIMB 11778 / NCTC 12712 / WDCM 00102 / Lb 14).